The primary structure comprises 186 residues: Elongation factor P (186 aa).

The protein belongs to the elongation factor P family.

It is found in the cytoplasm. It participates in protein biosynthesis; polypeptide chain elongation. In terms of biological role, involved in peptide bond synthesis. Stimulates efficient translation and peptide-bond synthesis on native or reconstituted 70S ribosomes in vitro. Probably functions indirectly by altering the affinity of the ribosome for aminoacyl-tRNA, thus increasing their reactivity as acceptors for peptidyl transferase. The sequence is that of Elongation factor P from Neisseria meningitidis serogroup A / serotype 4A (strain DSM 15465 / Z2491).